The chain runs to 234 residues: Prolactin-6A1 (234 aa).

An N-terminal signal peptide occupies residues 1–33 (MVKSWLRMSKKMEAGTLLMLLMSNILLWENVAS). The N-linked (GlcNAc...) asparagine glycan is linked to N61. 2 disulfides stabilise this stretch: C93–C209 and C226–C234.

Belongs to the somatotropin/prolactin family.

The protein resides in the secreted. This chain is Prolactin-6A1 (Prl6a1), found in Rattus norvegicus (Rat).